A 108-amino-acid polypeptide reads, in one-letter code: Insulin (108 aa).

Residues 1–24 (MALWTRLLPLLALLALWAPAPAQA) form the signal peptide. Cystine bridges form between Cys-31–Cys-94, Cys-43–Cys-107, and Cys-93–Cys-98. Positions 57-85 (EAENPQAGAVELGGGLGGLQALALEGPPQ) are cleaved as a propeptide — c peptide.

The protein belongs to the insulin family. Heterodimer of a B chain and an A chain linked by two disulfide bonds.

The protein resides in the secreted. Its function is as follows. Insulin decreases blood glucose concentration. It increases cell permeability to monosaccharides, amino acids and fatty acids. It accelerates glycolysis, the pentose phosphate cycle, and glycogen synthesis in liver. The chain is Insulin (INS) from Sus scrofa (Pig).